The primary structure comprises 878 residues: Bifunctional heparan sulfate N-deacetylase/N-sulfotransferase 1 (878 aa).

At 1–17 (MSLSLKTRRFGRPVRPQ) the chain is on the cytoplasmic side. A sufficient for localization to Golgi membrane region spans residues 1–169 (MSLSLKTRRF…VEYGVGIIGF (169 aa)). Residues 18–38 (LVLLLLFALCLLSVFISAYYL) traverse the membrane as a helical; Signal-anchor for type II membrane protein segment. The Lumenal portion of the chain corresponds to 39–878 (YGWKRGLEPS…WLREELQSTR (840 aa)). Residues 40–594 (GWKRGLEPSG…KRHKDIWSKE (555 aa)) are heparan sulfate N-deacetylase 1. The interval 47-71 (PSGSEAQSPDCDEPKISPSRLLPMK) is disordered. 3 N-linked (GlcNAc...) asparagine glycosylation sites follow: N231, N347, and N397. The heparan sulfate N-sulfotransferase 1 stretch occupies residues 595–878 (KTCDRFPKLL…WLREELQSTR (284 aa)). K610 serves as the catalytic For sulfotransferase activity. Residue 610–614 (KTGTT) participates in adenosine 3',5'-bisphosphate binding. Residue N663 is glycosylated (N-linked (GlcNAc...) asparagine). Residues S708 and W813 each coordinate adenosine 3',5'-bisphosphate. Cysteines 814 and 824 form a disulfide. 829-833 (KGRKY) is an adenosine 3',5'-bisphosphate binding site.

This sequence belongs to the sulfotransferase 1 family. NDST subfamily. As to quaternary structure, monomer.

It is found in the golgi apparatus membrane. The protein localises to the golgi apparatus. It localises to the trans-Golgi network membrane. The enzyme catalyses alpha-D-glucosaminyl-[heparan sulfate](n) + 3'-phosphoadenylyl sulfate = N-sulfo-alpha-D-glucosaminyl-[heparan sulfate](n) + adenosine 3',5'-bisphosphate + 2 H(+). It functions in the pathway glycan metabolism; heparan sulfate biosynthesis. The protein operates within glycan metabolism; heparin biosynthesis. Its function is as follows. Essential bifunctional enzyme that catalyzes both the N-deacetylation and the N-sulfation of glucosamine (GlcNAc) of the glycosaminoglycan in heparan sulfate. Modifies the GlcNAc-GlcA disaccharide repeating sugar backbone to make N-sulfated heparosan, a prerequisite substrate for later modifications in heparin biosynthesis. Plays a role in determining the extent and pattern of sulfation of heparan sulfate. The protein is Bifunctional heparan sulfate N-deacetylase/N-sulfotransferase 1 (ndst1) of Xenopus tropicalis (Western clawed frog).